Here is a 302-residue protein sequence, read N- to C-terminus: MPGQKIETGHEDIVHDVQMDYYGKRIATASSDCTIKITGVSNNGGSQQLATLTGHRGPVWEVAWAHPKYGSILASCSYDGQVILWKEGNQNQWTQDHVFTDHKSSVNSIAWAPHDIGLSLACGSSDGNISVFTARADGGWDTSRIDQAHPVGVTSVSWAPATAPGALVSSGLLDPVYKLASGGCDNTVKVWKLANGSWKMDCFPALQKHTDWVRDVAWAPNLGLPKSTIASGSQDGKVIIWTVGKEGEQWEGKVLKDFMTPVWRVSWSLTGNLLAVSDGNNNVTVWKEAVDGEWEQVTAVEP.

6 WD repeats span residues 9–48, 54–95, 101–142, 148–201, 208–251, and 257–296; these read GHED…GSQQ, GHRG…QWTQ, DHKS…GWDT, AHPV…WKMD, KHTD…EQWE, and DFMT…EWEQ.

Belongs to the WD repeat SEC13 family. In terms of assembly, part of the nuclear pore complex (NPC). The NPC has an eight-fold symmetrical structure comprising a central transport channel and two rings, the cytoplasmic and nuclear rings, to which eight filaments are attached. The cytoplasmic filaments have loose ends, while the nuclear filaments are joined in a distal ring, forming a nuclear basket. NPCs are highly dynamic in configuration and composition, and can be devided in 3 subcomplexes, the NUP62 subcomplex, the NUP107-160 subcomplex and the NUP93 subcomplex, containing approximately 30 different nucleoporin proteins. Interacts with MAG5, SEC31A and SEC31B.

The protein resides in the golgi apparatus. It is found in the endoplasmic reticulum. Its subcellular location is the nucleus envelope. The protein localises to the nucleus. It localises to the nuclear pore complex. Required for protein transport from the endoplasmic reticulum to the Golgi apparatus. This chain is Protein transport protein SEC13 homolog B, found in Arabidopsis thaliana (Mouse-ear cress).